We begin with the raw amino-acid sequence, 415 residues long: Probable carboxypeptidase ACLA_013260 (415 aa).

The signal sequence occupies residues 1–17; sequence MKFPWLLLVKGAASVAA. Asparagine 97 carries an N-linked (GlcNAc...) asparagine glycan. Residue aspartate 145 coordinates Zn(2+). The Proton acceptor role is filled by glutamate 177. Glutamate 178 serves as a coordination point for Zn(2+). N-linked (GlcNAc...) asparagine glycosylation is present at asparagine 271.

This sequence belongs to the peptidase M20A family. It depends on Zn(2+) as a cofactor.

The protein resides in the secreted. This is Probable carboxypeptidase ACLA_013260 from Aspergillus clavatus (strain ATCC 1007 / CBS 513.65 / DSM 816 / NCTC 3887 / NRRL 1 / QM 1276 / 107).